Here is a 95-residue protein sequence, read N- to C-terminus: Co-chaperonin GroES (95 aa).

This sequence belongs to the GroES chaperonin family. As to quaternary structure, heptamer of 7 subunits arranged in a ring. Interacts with the chaperonin GroEL.

The protein localises to the cytoplasm. In terms of biological role, together with the chaperonin GroEL, plays an essential role in assisting protein folding. The GroEL-GroES system forms a nano-cage that allows encapsulation of the non-native substrate proteins and provides a physical environment optimized to promote and accelerate protein folding. GroES binds to the apical surface of the GroEL ring, thereby capping the opening of the GroEL channel. This Chlorobium phaeovibrioides (strain DSM 265 / 1930) (Prosthecochloris vibrioformis (strain DSM 265)) protein is Co-chaperonin GroES.